A 414-amino-acid chain; its full sequence is MDKRTTQFLKSRFQSYYKNAEIGLPDHLPNREWAFIFYDDMPEKMMHRHKSFGSPGEALDYLYGMAPAHVYNSTAYYEYPDAKKMNEKNWLGAELIFDLDADHLPNAPRNYADMLELVKKEALKLLDFLLDDFGFSEQEIQLVFSGGRGYHFHIVSPKVLTLGSSERREIVNYVSGRDLEFKYFFREVAMDGDFGTGSKTFKGMKNVPMKCTLVGYDSGWGRRIALYLTDYMKRESEKKYKKDMFPELRRHEKVGDTTIKKLINIANSETGLKDILEKGRLDFDVRNFKEIAAYFMQESAEDFLHRFGASVDEPVTADIKRLIRVPGSLHGGSGMLVKKLALSELEEFDPLNDAVVFGERPVKITASKPFSVQLKGKDLRIEEGIQEVPEYAAVYLICRGVAEYGHRRNQPDTV.

Residues Asp-98, Asp-100, and Asp-312 contribute to the active site.

The protein belongs to the eukaryotic-type primase small subunit family. In terms of assembly, heterodimer of a small subunit (PriS) and a large subunit (PriL). It depends on Mg(2+) as a cofactor. Mn(2+) serves as cofactor.

Its function is as follows. Catalytic subunit of DNA primase, an RNA polymerase that catalyzes the synthesis of short RNA molecules used as primers for DNA polymerase during DNA replication. The small subunit contains the primase catalytic core and has DNA synthesis activity on its own. Binding to the large subunit stabilizes and modulates the activity, increasing the rate of DNA synthesis while decreasing the length of the DNA fragments, and conferring RNA synthesis capability. The DNA polymerase activity may enable DNA primase to also catalyze primer extension after primer synthesis. May also play a role in DNA repair. The sequence is that of DNA primase small subunit PriS from Methanosarcina acetivorans (strain ATCC 35395 / DSM 2834 / JCM 12185 / C2A).